Reading from the N-terminus, the 134-residue chain is UPF0412 protein YaaI (134 aa).

Positions 1–23 are cleaved as a signal peptide; sequence MRSVLTISVGLLFGLALSSVAHA.

It belongs to the UPF0412 family.

This chain is UPF0412 protein YaaI, found in Salmonella typhimurium (strain LT2 / SGSC1412 / ATCC 700720).